The following is a 234-amino-acid chain: Large ribosomal subunit protein uL1 (234 aa).

It belongs to the universal ribosomal protein uL1 family. In terms of assembly, part of the 50S ribosomal subunit.

In terms of biological role, binds directly to 23S rRNA. The L1 stalk is quite mobile in the ribosome, and is involved in E site tRNA release. Functionally, protein L1 is also a translational repressor protein, it controls the translation of the L11 operon by binding to its mRNA. This is Large ribosomal subunit protein uL1 from Aliivibrio fischeri (strain MJ11) (Vibrio fischeri).